The primary structure comprises 205 residues: High frequency lysogenization protein HflD homolog (205 aa).

The protein belongs to the HflD family.

Its subcellular location is the cytoplasm. The protein resides in the cell inner membrane. The protein is High frequency lysogenization protein HflD homolog of Shewanella baltica (strain OS223).